Consider the following 597-residue polypeptide: mRNA-capping enzyme (597 aa).

A TPase region spans residues 1-212; the sequence is MAYNKIPPRW…DEDGKKDSEP (212 aa). Positions 25-183 constitute a Tyrosine-protein phosphatase domain; it reads LPLKTMLGPR…FRRYGDIEEA (159 aa). The Phosphocysteine intermediate role is filled by cysteine 126. A disordered region spans residues 181-221; that stretch reads EEAPPPPVLPDWCFEDEDEEDEDEDGKKDSEPGSSASFSKR. Acidic residues predominate over residues 193–204; sequence CFEDEDEEDEDE. The interval 229 to 597 is GTase; the sequence is GAIFLEGITV…PPPKRLHRPT (369 aa). Residue lysine 294 is the N6-GMP-lysine intermediate of the active site. GTP contacts are provided by residues arginine 299, arginine 315, 343 to 345, 458 to 460, and 528 to 533; these read DGE, KWK, and RQRIDK. Residues 330–386 form an interaction with POLR2A region; sequence RKDLRMHLSNTLLDGEMIIDKVNGQAVPRYLIYDIIKFNAQPVGDCDFNIRLQCIER. Residues 573-597 form a disordered region; it reads KRKYPLDPDTELMPPPPPKRLHRPT.

This sequence in the N-terminal section; belongs to the non-receptor class of the protein-tyrosine phosphatase family. In the C-terminal section; belongs to the eukaryotic GTase family. As to quaternary structure, interacts with SUPT5H and RNMT. Interacts with POLR2A (via C-terminus); this enhances guanylyltransferase activity. Binds (via GTase domain) to the elongating phosphorylated form of RNA polymerase II; can form direct interactions with the phosphorylated POLR2A C-terminal domain and indirect interactions via bound RNA.

It localises to the nucleus. It carries out the reaction a 5'-end triphospho-ribonucleoside in mRNA + H2O = a 5'-end diphospho-ribonucleoside in mRNA + phosphate + H(+). It catalyses the reaction a 5'-end diphospho-ribonucleoside in mRNA + GTP + H(+) = a 5'-end (5'-triphosphoguanosine)-ribonucleoside in mRNA + diphosphate. Its activity is regulated as follows. RNA triphosphatase activity is inhibited by vanadate, iodoacetate and magnesium. In terms of biological role, bifunctional mRNA-capping enzyme exhibiting RNA 5'-triphosphate monophosphatase activity in the N-terminal part and mRNA guanylyltransferase activity in the C-terminal part. Catalyzes the first two steps of cap formation: by removing the gamma-phosphate from the 5'-triphosphate end of nascent mRNA to yield a diphosphate end, and by transferring the GMP moiety of GTP to the 5'-diphosphate terminus of RNA via a covalent enzyme-GMP reaction intermediate. This is mRNA-capping enzyme (Rngtt) from Mus musculus (Mouse).